A 103-amino-acid polypeptide reads, in one-letter code: Transcriptional regulator WhiB7 (103 aa).

[4Fe-4S] cluster is bound by residues cysteine 17, cysteine 49, cysteine 52, and cysteine 58. A 4Fe-4S Wbl-type domain is found at 25–82; that stretch reads PCHVGDPDLWFAENPGDLERAKALCAGCPIRVQCLTAALERQEPWGVWGGEILDRGSI. The disordered stretch occupies residues 82 to 103; that stretch reads IVARKRPRGRPRKDSGGNPAAA.

This sequence belongs to the WhiB family. Requires [4Fe-4S] cluster as cofactor. Post-translationally, the Fe-S cluster can be nitrosylated by nitric oxide (NO). In terms of processing, upon Fe-S cluster removal intramolecular disulfide bonds are formed.

It localises to the cytoplasm. Functionally, acts as a transcriptional regulator. Probably redox-responsive. The apo- but not holo-form probably binds DNA. Participates in maintaining a reduced cytoplasmic (MSH/MSSM) environment under normal growth conditions and directly or indirectly controls the concentration of mycothiol (MSH + MSSM). In Mycolicibacterium smegmatis (strain ATCC 700084 / mc(2)155) (Mycobacterium smegmatis), this protein is Transcriptional regulator WhiB7 (whiB7).